The primary structure comprises 317 residues: Apolipoprotein E (317 aa).

Positions 1–18 (MKVLWAALLVTFLAGCQA) are cleaved as a signal peptide. 2 O-linked (GalNAc...) threonine glycosylation sites follow: Thr-26 and Thr-36. Tandem repeats lie at residues 80 to 101 (ALMD…EQLT), 102 to 123 (PVAE…ARLG), 124 to 145 (ADME…AMLG), 146 to 167 (QSTE…KRLL), 168 to 189 (RDAD…EGAE), 190 to 211 (RGLS…VRAA), 212 to 233 (TVGS…ERLR), and 234 to 255 (ARME…EQVA). Residues 80–255 (ALMDETMKEL…RLDEVKEQVA (176 aa)) are 8 X 22 AA approximate tandem repeats. N-linked (Glc) (glycation) lysine glycosylation occurs at Lys-93. Residue Met-143 is modified to Methionine sulfoxide. Position 147 is a phosphoserine; by FAM20C (Ser-147). Residues 158 to 168 (HLRKLRKRLLR) are LDL and other lipoprotein receptors binding. 162-165 (LRKR) is a binding site for heparin. The segment at 210 to 290 (AATVGSLAGQ…SWFEPLVEDM (81 aa)) is lipid-binding and lipoprotein association. Thr-212 is a glycosylation site (O-linked (GalNAc...) threonine). 229 to 236 (GERLRARM) is a heparin binding site. Residues 266-317 (QQIRLQAEAFQARLKSWFEPLVEDMQRQWAGLVEKVQAAVGTSAAPVPSDNH) are homooligomerization. Positions 278–290 (RLKSWFEPLVEDM) are specificity for association with VLDL. O-linked (GalNAc...) threonine glycosylation is present at Thr-307. Ser-308 and Ser-314 each carry an O-linked (GalNAc...) serine glycan.

Belongs to the apolipoprotein A1/A4/E family. As to quaternary structure, homotetramer. May interact with ABCA1; functionally associated with ABCA1 in the biogenesis of HDLs. May interact with APP/A4 amyloid-beta peptide; the interaction is extremely stable in vitro but its physiological significance is unclear. May interact with MAPT. May interact with MAP2. In the cerebrospinal fluid, interacts with secreted SORL1. Interacts with PMEL; this allows the loading of PMEL luminal fragment on ILVs to induce fibril nucleation. In terms of assembly, (Microbial infection) Interacts with hepatitis C virus (HCV) envelope glycoprotein E2; this interaction is required for HCV infectivity and production. Post-translationally, APOE exists as multiple glycosylated and sialylated glycoforms within cells and in plasma. The extent of glycosylation and sialylation are tissue and context specific. Plasma APOE undergoes desialylation and is less glycosylated and sialylated than the cellular form. Glycosylation is not required for proper expression and secretion. O-glycosylated with core 1 or possibly core 8 glycans. Thr-307 and Ser-314 are minor glycosylation sites compared to Ser-308. In terms of processing, glycated in plasma VLDL of normal subjects, and of hyperglycemic diabetic patients at a higher level (2-3 fold). Phosphorylated by FAM20C in the extracellular medium. Post-translationally, undergoes C-terminal proteolytic processing in neurons. C-terminally truncated APOE has a tendency to form neurotoxic intracellular neurofibrillary tangle-like inclusions in neurons. In terms of tissue distribution, produced by several tissues and cell types and mainly found associated with lipid particles in the plasma, the interstitial fluid and lymph. Mainly synthesized by liver hepatocytes. Significant quantities are also produced in brain, mainly by astrocytes and glial cells in the cerebral cortex, but also by neurons in frontal cortex and hippocampus. It is also expressed by cells of the peripheral nervous system. Also expressed by adrenal gland, testis, ovary, skin, kidney, spleen and adipose tissue and macrophages in various tissues.

The protein resides in the secreted. It localises to the extracellular space. The protein localises to the extracellular matrix. Its subcellular location is the extracellular vesicle. It is found in the endosome. The protein resides in the multivesicular body. Functionally, APOE is an apolipoprotein, a protein associating with lipid particles, that mainly functions in lipoprotein-mediated lipid transport between organs via the plasma and interstitial fluids. APOE is a core component of plasma lipoproteins and is involved in their production, conversion and clearance. Apolipoproteins are amphipathic molecules that interact both with lipids of the lipoprotein particle core and the aqueous environment of the plasma. As such, APOE associates with chylomicrons, chylomicron remnants, very low density lipoproteins (VLDL) and intermediate density lipoproteins (IDL) but shows a preferential binding to high-density lipoproteins (HDL). It also binds a wide range of cellular receptors including the LDL receptor/LDLR, the LDL receptor-related proteins LRP1, LRP2 and LRP8 and the very low-density lipoprotein receptor/VLDLR that mediate the cellular uptake of the APOE-containing lipoprotein particles. Finally, APOE also has a heparin-binding activity and binds heparan-sulfate proteoglycans on the surface of cells, a property that supports the capture and the receptor-mediated uptake of APOE-containing lipoproteins by cells. A main function of APOE is to mediate lipoprotein clearance through the uptake of chylomicrons, VLDLs, and HDLs by hepatocytes. APOE is also involved in the biosynthesis by the liver of VLDLs as well as their uptake by peripheral tissues ensuring the delivery of triglycerides and energy storage in muscle, heart and adipose tissues. By participating in the lipoprotein-mediated distribution of lipids among tissues, APOE plays a critical role in plasma and tissues lipid homeostasis. APOE is also involved in two steps of reverse cholesterol transport, the HDLs-mediated transport of cholesterol from peripheral tissues to the liver, and thereby plays an important role in cholesterol homeostasis. First, it is functionally associated with ABCA1 in the biogenesis of HDLs in tissues. Second, it is enriched in circulating HDLs and mediates their uptake by hepatocytes. APOE also plays an important role in lipid transport in the central nervous system, regulating neuron survival and sprouting. APOE is also involved in innate and adaptive immune responses, controlling for instance the survival of myeloid-derived suppressor cells. Binds to the immune cell receptor LILRB4. APOE may also play a role in transcription regulation through a receptor-dependent and cholesterol-independent mechanism, that activates MAP3K12 and a non-canonical MAPK signal transduction pathway that results in enhanced AP-1-mediated transcription of APP. In terms of biological role, (Microbial infection) Through its interaction with HCV envelope glycoprotein E2, participates in the attachment of HCV to HSPGs and other receptors (LDLr, VLDLr, and SR-B1) on the cell surface and to the assembly, maturation and infectivity of HCV viral particles. This interaction is probably promoted via the up-regulation of cellular autophagy by the virus. The polypeptide is Apolipoprotein E (Homo sapiens (Human)).